Consider the following 646-residue polypeptide: Alkyl/aryl-sulfatase BDS1 (646 aa).

Met1 carries the N-acetylmethionine modification. Positions 162, 164, 166, 167, 273, 292, and 337 each coordinate Zn(2+).

Belongs to the metallo-beta-lactamase superfamily. Type III sulfatase family. Zn(2+) serves as cofactor.

Functionally, alkyl/aryl-sulfatase. Enables the use of SDS and 4-nitrocatechol as sulfur source. This Saccharomyces cerevisiae (strain ATCC 204508 / S288c) (Baker's yeast) protein is Alkyl/aryl-sulfatase BDS1 (BDS1).